A 1828-amino-acid chain; its full sequence is Protein TIC 214 (1828 aa).

Helical transmembrane passes span 18–38, 64–84, 87–107, 124–144, 172–192, and 222–242; these read IINS…FSIG, FITG…HLAM, PYTI…WKNH, FSIQ…HFVL, VGWL…LFWI, and VNIF…SPIL. A compositionally biased stretch (basic and acidic residues) spans 270-279; that stretch reads SEAKETKQEQ. Disordered stretches follow at residues 270–301, 618–637, 741–763, and 1533–1571; these read SEAK…PNKL, DLQQ…HAIR, EFKT…EDKK, and KEEF…RQSK. Basic and acidic residues predominate over residues 1550–1562; that stretch reads KDVEKDYAKSDIK.

It belongs to the TIC214 family. In terms of assembly, part of the Tic complex.

It is found in the plastid. The protein resides in the chloroplast inner membrane. Its function is as follows. Involved in protein precursor import into chloroplasts. May be part of an intermediate translocation complex acting as a protein-conducting channel at the inner envelope. The protein is Protein TIC 214 of Calycanthus floridus var. glaucus (Eastern sweetshrub).